The sequence spans 379 residues: Lipid-A-disaccharide synthase (379 aa).

It belongs to the LpxB family.

It carries out the reaction a lipid X + a UDP-2-N,3-O-bis[(3R)-3-hydroxyacyl]-alpha-D-glucosamine = a lipid A disaccharide + UDP + H(+). It functions in the pathway bacterial outer membrane biogenesis; LPS lipid A biosynthesis. Its function is as follows. Condensation of UDP-2,3-diacylglucosamine and 2,3-diacylglucosamine-1-phosphate to form lipid A disaccharide, a precursor of lipid A, a phosphorylated glycolipid that anchors the lipopolysaccharide to the outer membrane of the cell. This Pseudomonas fluorescens (strain SBW25) protein is Lipid-A-disaccharide synthase.